Consider the following 82-residue polypeptide: MLPFVQEQIGAFIVNFFILSVVCAVTLVVCLAILTAIRLCVQCVSGCHTLVFLPAVHIYNTGRAAYVKFQESHPPYPPEDWV.

Over 1–16 (MLPFVQEQIGAFIVNF) the chain is Virion surface. A helical membrane pass occupies residues 17–37 (FILSVVCAVTLVVCLAILTAI). The Intravirion portion of the chain corresponds to 38–78 (RLCVQCVSGCHTLVFLPAVHIYNTGRAAYVKFQESHPPYPP).

It belongs to the betacoronaviruses E protein family. As to quaternary structure, homopentamer. Interacts with membrane protein M in the budding compartment of the host cell, which is located between endoplasmic reticulum and the Golgi complex. Interacts with Nucleoprotein.

The protein localises to the host Golgi apparatus membrane. Functionally, plays a central role in virus morphogenesis and assembly. Acts as a viroporin and self-assembles in host membranes forming pentameric protein-lipid pores that allow ion transport. Also plays a role in the induction of apoptosis. The polypeptide is Envelope small membrane protein (Pipistrellus abramus (Japanese pipistrelle)).